Here is a 218-residue protein sequence, read N- to C-terminus: Probable transaldolase (218 aa).

The Schiff-base intermediate with substrate role is filled by Lys87.

This sequence belongs to the transaldolase family. Type 3B subfamily.

It is found in the cytoplasm. It carries out the reaction D-sedoheptulose 7-phosphate + D-glyceraldehyde 3-phosphate = D-erythrose 4-phosphate + beta-D-fructose 6-phosphate. The protein operates within carbohydrate degradation; pentose phosphate pathway; D-glyceraldehyde 3-phosphate and beta-D-fructose 6-phosphate from D-ribose 5-phosphate and D-xylulose 5-phosphate (non-oxidative stage): step 2/3. In terms of biological role, transaldolase is important for the balance of metabolites in the pentose-phosphate pathway. The protein is Probable transaldolase of Cytophaga hutchinsonii (strain ATCC 33406 / DSM 1761 / CIP 103989 / NBRC 15051 / NCIMB 9469 / D465).